Consider the following 243-residue polypeptide: MLIIPAIDLKDGKCVRLKQGRMEDDTVFSDDLVATAQHWVNEGARRLHLVDLNGAFAGTPIHKPVVEAIAKAQPELPIQIGGGIRSLETIEHYLEAGVTFVIIGTKAVQEPEFVEEACKSFAGHIIVGIDAMNGMVATDGWANVTDVKATDLAKRFADAGVSSIVYTDIARDGMMQGVNVEQTVNLAQYSGLPVIASGGVTNLDDVRNLKGQLGILGAITGRAIYEGTLNLREAQLLLDENRL.

Aspartate 8 functions as the Proton acceptor in the catalytic mechanism. Aspartate 130 acts as the Proton donor in catalysis.

The protein belongs to the HisA/HisF family.

It localises to the cytoplasm. It carries out the reaction 1-(5-phospho-beta-D-ribosyl)-5-[(5-phospho-beta-D-ribosylamino)methylideneamino]imidazole-4-carboxamide = 5-[(5-phospho-1-deoxy-D-ribulos-1-ylimino)methylamino]-1-(5-phospho-beta-D-ribosyl)imidazole-4-carboxamide. The protein operates within amino-acid biosynthesis; L-histidine biosynthesis; L-histidine from 5-phospho-alpha-D-ribose 1-diphosphate: step 4/9. The sequence is that of 1-(5-phosphoribosyl)-5-[(5-phosphoribosylamino)methylideneamino] imidazole-4-carboxamide isomerase from Acinetobacter baumannii (strain SDF).